We begin with the raw amino-acid sequence, 759 residues long: LON peptidase N-terminal domain and RING finger protein 3 (759 aa).

The tract at residues 1-69 (MESVRIEQML…PGTSTPESKV (69 aa)) is disordered. Residues 57 to 66 (EQSPGTSTPE) are compositionally biased toward polar residues. The stretch at 67-100 (SKVLLTQADALASRGRIREALEVYRQLSERQQLV) is one TPR 1 repeat. The segment at 158 to 196 (CRKCHGFLSDPVSLSCGHTFCKLCLERGRAADRRCALCG) adopts an RING-type 1 zinc-finger fold. TPR repeat units lie at residues 243–276 (ASQL…APND), 278–310 (LLYS…RPMG), and 312–344 (KAHF…DGKN). The segment at 360 to 454 (HCSSQEEAAA…TDQGDKPALS (95 aa)) is disordered. The span at 380–393 (AKVKGDGQQHHMKD) shows a compositional bias: basic and acidic residues. Residues 467 to 505 (CALCMRLFYEPVTTPCGHTFCLKCLERCLDHNAKCPLCK) form an RING-type 2 zinc finger. Residues 546–755 (MEELSNLNKN…GIRRVLAFIS (210 aa)) enclose the Lon N-terminal domain.

This is LON peptidase N-terminal domain and RING finger protein 3 (LONRF3) from Homo sapiens (Human).